Consider the following 214-residue polypeptide: Cytochrome c biogenesis ATP-binding export protein CcmA (214 aa).

The 203-residue stretch at 12–214 folds into the ABC transporter domain; it reads LAAHALAFSR…TRMLTLEAAA (203 aa). 44-51 lines the ATP pocket; that stretch reads GDNGAGKT.

Belongs to the ABC transporter superfamily. CcmA exporter (TC 3.A.1.107) family. The complex is composed of two ATP-binding proteins (CcmA) and two transmembrane proteins (CcmB).

It is found in the cell inner membrane. The catalysed reaction is heme b(in) + ATP + H2O = heme b(out) + ADP + phosphate + H(+). Functionally, part of the ABC transporter complex CcmAB involved in the biogenesis of c-type cytochromes; once thought to export heme, this seems not to be the case, but its exact role is uncertain. Responsible for energy coupling to the transport system. In Xanthomonas oryzae pv. oryzae (strain MAFF 311018), this protein is Cytochrome c biogenesis ATP-binding export protein CcmA.